The following is a 436-amino-acid chain: Putative F-box/FBD/LRR-repeat protein At5g44960 (436 aa).

The 47-residue stretch at 4–50 folds into the F-box domain; sequence CDYINELPDSLLTQILLDLRTKDSVKTSVSSKRWRNLWLNVPGLDLF. LRR repeat units follow at residues 287–310 and 397–420; these read ISSVRHMIISGSILEELHSYSKLG and SAVLKKLTLRFSFFSSIESESYKK. The FBD domain occupies 355–407; the sequence is EENIDFHEVPQCLISTLEYVHINKLMMMEQSGIKLVNYFIENSAVLKKLTLRF.

The polypeptide is Putative F-box/FBD/LRR-repeat protein At5g44960 (Arabidopsis thaliana (Mouse-ear cress)).